Consider the following 80-residue polypeptide: Exodeoxyribonuclease 7 small subunit (80 aa).

This sequence belongs to the XseB family. Heterooligomer composed of large and small subunits.

The protein localises to the cytoplasm. The catalysed reaction is Exonucleolytic cleavage in either 5'- to 3'- or 3'- to 5'-direction to yield nucleoside 5'-phosphates.. Functionally, bidirectionally degrades single-stranded DNA into large acid-insoluble oligonucleotides, which are then degraded further into small acid-soluble oligonucleotides. The protein is Exodeoxyribonuclease 7 small subunit of Cronobacter sakazakii (strain ATCC BAA-894) (Enterobacter sakazakii).